A 1233-amino-acid chain; its full sequence is Glutamate receptor ionotropic, NMDA 2C (1233 aa).

A signal peptide spans 1-19 (MGGALGPALLLTSLFGAWA). Over 20–554 (GLGPGQGEQG…SAFLEPYSPA (535 aa)) the chain is Extracellular. Residues N70 and N73 are each glycosylated (N-linked (GlcNAc...) asparagine). A disulfide bond links C82 and C317. 2 N-linked (GlcNAc...) asparagine glycosylation sites follow: N337 and N438. Cystine bridges form between C426–C453 and C433–C454. S509, T511, and R516 together coordinate L-glutamate. A glycan (N-linked (GlcNAc...) asparagine) is linked at N539. The chain crosses the membrane as a helical span at residues 555 to 575 (VWVMMFVMCLTVVAITVFMFE). The Cytoplasmic segment spans residues 576–598 (YFSPVSYNQNLTRGKKSGGPAFT). The discontinuously helical intramembrane region spans 599 to 611 (IGKSVWLLWALVF). The segment at 601-620 (KSVWLLWALVFNNSVPIENP) is pore-forming. The Cytoplasmic portion of the chain corresponds to 612–626 (NNSVPIENPRGTTSK). The chain crosses the membrane as a helical span at residues 627-644 (IMVLVWAFFAVIFLASYT). Residues 645 to 813 (ANLAAFMIQE…EVMSSKLDID (169 aa)) are Extracellular-facing. Residue N685 is glycosylated (N-linked (GlcNAc...) asparagine). 3 residues coordinate L-glutamate: S687, T688, and D729. A disulfide bridge links C743 with C798. A helical transmembrane segment spans residues 814-836 (NMAGVFYMLLVAMGLALLVFAWE). Over 837–1233 (HLVYWKLRHS…RRISSLESEV (397 aa)) the chain is Cytoplasmic. 3 positions are modified to phosphoserine: S875, S881, and S912. Residues 920-994 (IENWGGGRRA…GPPLSDVSRV (75 aa)) form a disordered region. Composition is skewed to pro residues over residues 929 to 956 (APPPSPCPTPRSGPSPCLPTPDPPPEPS) and 975 to 987 (PQPPGRPPTPGPP). Residues 1231-1233 (SEV) carry the PDZ-binding motif.

It belongs to the glutamate-gated ion channel (TC 1.A.10.1) family. NR2C/GRIN2C subfamily. In terms of assembly, heterotetramer. Forms heterotetrameric channels composed of two GluN1/zeta subunits (GRIN1), and two identical GluN2/epsilon subunits (GRIN2A, GRIN2B, GRIN2C or GRIN2D) or GluN3 subunits (GRIN3A or GRIN3B) (in vitro). In vivo, the subunit composition may depend on the expression levels of the different subunits. Interacts with PDZ domains of PATJ and DLG4. Interacts (via PDZ-binding motif) with SNX27 (via PDZ domain); the interaction is required for recycling to the plasma membrane when endocytosed and prevent degradation in lysosomes. As to expression, mainly expressed in brain with predominant expression is in the cerebellum, also present in the hippocampus, amygdala, caudate nucleus, corpus callosum, subthalamic nuclei and thalamus. Detected in the heart, skeletal muscle and pancreas.

The protein localises to the cell membrane. Its subcellular location is the postsynaptic cell membrane. The enzyme catalyses Ca(2+)(in) = Ca(2+)(out). It catalyses the reaction Na(+)(in) = Na(+)(out). The catalysed reaction is K(+)(in) = K(+)(out). Functionally, component of N-methyl-D-aspartate (NMDA) receptors (NMDARs) that function as heterotetrameric, ligand-gated cation channels with high calcium permeability and voltage-dependent block by Mg(2+). Participates in synaptic plasticity for learning and memory formation by contributing to the slow phase of excitatory postsynaptic current and long-term synaptic potentiation. Channel activation requires binding of the neurotransmitter L-glutamate to the GluN2 subunit, glycine or D-serine binding to the GluN1 subunit, plus membrane depolarization to eliminate channel inhibition by Mg(2+). NMDARs mediate simultaneously the potasium efflux and the influx of calcium and sodium. Each GluN2 subunit confers differential attributes to channel properties, including activation, deactivation and desensitization kinetics, pH sensitivity, Ca2(+) permeability, and binding to allosteric modulators. This chain is Glutamate receptor ionotropic, NMDA 2C, found in Homo sapiens (Human).